Here is a 326-residue protein sequence, read N- to C-terminus: GTP 3',8-cyclase (326 aa).

The region spanning 4–227 (KHERNINYMR…LTPQKNILGN (224 aa)) is the Radical SAM core domain. R13 provides a ligand contact to GTP. [4Fe-4S] cluster-binding residues include C20 and C24. Y26 is a binding site for S-adenosyl-L-methionine. C27 contributes to the [4Fe-4S] cluster binding site. Residue R63 participates in GTP binding. Position 67 (G67) interacts with S-adenosyl-L-methionine. T94 provides a ligand contact to GTP. An S-adenosyl-L-methionine-binding site is contributed by S118. A GTP-binding site is contributed by K155. M189 provides a ligand contact to S-adenosyl-L-methionine. 2 residues coordinate [4Fe-4S] cluster: C253 and C256. 258–260 (RIR) is a binding site for GTP. C270 is a [4Fe-4S] cluster binding site.

Belongs to the radical SAM superfamily. MoaA family. In terms of assembly, monomer and homodimer. [4Fe-4S] cluster serves as cofactor.

It catalyses the reaction GTP + AH2 + S-adenosyl-L-methionine = (8S)-3',8-cyclo-7,8-dihydroguanosine 5'-triphosphate + 5'-deoxyadenosine + L-methionine + A + H(+). It functions in the pathway cofactor biosynthesis; molybdopterin biosynthesis. Functionally, catalyzes the cyclization of GTP to (8S)-3',8-cyclo-7,8-dihydroguanosine 5'-triphosphate. The protein is GTP 3',8-cyclase of Syntrophomonas wolfei subsp. wolfei (strain DSM 2245B / Goettingen).